The sequence spans 317 residues: Putative carboxypeptidase RP402 (317 aa).

Ser125 acts as the Nucleophile in catalysis. Catalysis depends on charge relay system residues Glu225 and His288.

It belongs to the peptidase S66 family.

This chain is Putative carboxypeptidase RP402, found in Rickettsia prowazekii (strain Madrid E).